Consider the following 99-residue polypeptide: Small ribosomal subunit protein eS24 (99 aa).

It belongs to the eukaryotic ribosomal protein eS24 family.

In Methanothrix thermoacetophila (strain DSM 6194 / JCM 14653 / NBRC 101360 / PT) (Methanosaeta thermophila), this protein is Small ribosomal subunit protein eS24.